A 267-amino-acid chain; its full sequence is 3-deoxy-manno-octulosonate cytidylyltransferase 2 (267 aa).

It belongs to the KdsB family.

Its subcellular location is the cytoplasm. The catalysed reaction is 3-deoxy-alpha-D-manno-oct-2-ulosonate + CTP = CMP-3-deoxy-beta-D-manno-octulosonate + diphosphate. It functions in the pathway nucleotide-sugar biosynthesis; CMP-3-deoxy-D-manno-octulosonate biosynthesis; CMP-3-deoxy-D-manno-octulosonate from 3-deoxy-D-manno-octulosonate and CTP: step 1/1. It participates in bacterial outer membrane biogenesis; lipopolysaccharide biosynthesis. In terms of biological role, activates KDO (a required 8-carbon sugar) for incorporation into bacterial lipopolysaccharide in Gram-negative bacteria. The chain is 3-deoxy-manno-octulosonate cytidylyltransferase 2 from Burkholderia ambifaria (strain MC40-6).